Reading from the N-terminus, the 197-residue chain is Segregation and condensation protein B (197 aa).

Belongs to the ScpB family. Homodimer. Homodimerization may be required to stabilize the binding of ScpA to the Smc head domains. Component of a cohesin-like complex composed of ScpA, ScpB and the Smc homodimer, in which ScpA and ScpB bind to the head domain of Smc. The presence of the three proteins is required for the association of the complex with DNA.

The protein localises to the cytoplasm. In terms of biological role, participates in chromosomal partition during cell division. May act via the formation of a condensin-like complex containing Smc and ScpA that pull DNA away from mid-cell into both cell halves. In Bacillus pumilus (strain SAFR-032), this protein is Segregation and condensation protein B.